We begin with the raw amino-acid sequence, 644 residues long: Low affinity sulfate transporter 3 (644 aa).

Polar residues predominate over residues 1–19 (MSSLGTEQFSERSQWVLNS). Residues 1–20 (MSSLGTEQFSERSQWVLNSP) are disordered. 13 helical membrane passes run 50 to 70 (AVSF…YSAT), 76 to 96 (LLSG…YANL), 99 to 119 (LDPQ…ALMG), 124 to 144 (IAIG…PKVI), 156 to 176 (LVFT…VLRL), 179 to 199 (LVDF…AIVI), 242 to 262 (PLNF…RFIG), 268 to 288 (FFWL…LIVF), 328 to 348 (IGLI…RSFA), 394 to 414 (CKTA…LELF), 418 to 438 (LYYT…PGLI), 455 to 475 (LACL…GLLI), and 518 to 538 (PGIL…AGFV). The STAS domain occupies 511-635 (YPMAVTTPGI…LTVAEAVDAC (125 aa)).

This sequence belongs to the SLC26A/SulP transporter (TC 2.A.53) family.

It is found in the membrane. Low-affinity H(+)/sulfate cotransporter which may be involved in the internal transport of sulfate between cellular or subcellular compartments within the plant. The chain is Low affinity sulfate transporter 3 (ST3) from Stylosanthes hamata (Caribbean stylo).